A 199-amino-acid chain; its full sequence is 3-isopropylmalate dehydratase small subunit (199 aa).

Belongs to the LeuD family. LeuD type 1 subfamily. In terms of assembly, heterodimer of LeuC and LeuD.

It catalyses the reaction (2R,3S)-3-isopropylmalate = (2S)-2-isopropylmalate. It participates in amino-acid biosynthesis; L-leucine biosynthesis; L-leucine from 3-methyl-2-oxobutanoate: step 2/4. Functionally, catalyzes the isomerization between 2-isopropylmalate and 3-isopropylmalate, via the formation of 2-isopropylmaleate. This Leifsonia xyli subsp. xyli (strain CTCB07) protein is 3-isopropylmalate dehydratase small subunit.